Reading from the N-terminus, the 147-residue chain is Large ribosomal subunit protein uL13 (147 aa).

Belongs to the universal ribosomal protein uL13 family. Part of the 50S ribosomal subunit.

In terms of biological role, this protein is one of the early assembly proteins of the 50S ribosomal subunit, although it is not seen to bind rRNA by itself. It is important during the early stages of 50S assembly. The sequence is that of Large ribosomal subunit protein uL13 from Mycobacterium marinum (strain ATCC BAA-535 / M).